Reading from the N-terminus, the 537-residue chain is Apoptosis inhibitor 5-like protein API5 (537 aa).

The segment at 9-363 is ARM-like and Heat-like helical repeats; it reads AEVERLYELG…TTNSLCGYKI (355 aa). The disordered stretch occupies residues 465–537; it reads WMEQPKKPAP…GGRGRGWGYR (73 aa). The segment covering 474–492 has biased composition (polar residues); that stretch reads PTTTGGKRSQPATNGNTPA.

The protein belongs to the API5 family. As to quaternary structure, interacts with AIP1 and AIP2.

The protein resides in the nucleus. Functionally, putative anti-apoptotic factor involved in the regulation of tapetal programmed cell death (PCD) and degeneration during anther development. Interacts directly with the DEAD-box ATP-dependent RNA helicases AIP1 and AIP2 that form dimers and bind the promoter region of the cysteine protease CP1 involved in tapetum PCD. This chain is Apoptosis inhibitor 5-like protein API5, found in Oryza sativa subsp. japonica (Rice).